The following is a 559-amino-acid chain: Dihydroxy-acid dehydratase (559 aa).

Mg(2+) is bound at residue aspartate 78. Cysteine 119 is a [2Fe-2S] cluster binding site. Residues aspartate 120 and lysine 121 each coordinate Mg(2+). Lysine 121 is modified (N6-carboxylysine). Cysteine 191 provides a ligand contact to [2Fe-2S] cluster. Glutamate 442 lines the Mg(2+) pocket. Serine 468 acts as the Proton acceptor in catalysis.

The protein belongs to the IlvD/Edd family. In terms of assembly, homodimer. Requires [2Fe-2S] cluster as cofactor. Mg(2+) is required as a cofactor.

It carries out the reaction (2R)-2,3-dihydroxy-3-methylbutanoate = 3-methyl-2-oxobutanoate + H2O. The catalysed reaction is (2R,3R)-2,3-dihydroxy-3-methylpentanoate = (S)-3-methyl-2-oxopentanoate + H2O. The protein operates within amino-acid biosynthesis; L-isoleucine biosynthesis; L-isoleucine from 2-oxobutanoate: step 3/4. It participates in amino-acid biosynthesis; L-valine biosynthesis; L-valine from pyruvate: step 3/4. Functions in the biosynthesis of branched-chain amino acids. Catalyzes the dehydration of (2R,3R)-2,3-dihydroxy-3-methylpentanoate (2,3-dihydroxy-3-methylvalerate) into 2-oxo-3-methylpentanoate (2-oxo-3-methylvalerate) and of (2R)-2,3-dihydroxy-3-methylbutanoate (2,3-dihydroxyisovalerate) into 2-oxo-3-methylbutanoate (2-oxoisovalerate), the penultimate precursor to L-isoleucine and L-valine, respectively. This Agathobacter rectalis (strain ATCC 33656 / DSM 3377 / JCM 17463 / KCTC 5835 / VPI 0990) (Eubacterium rectale) protein is Dihydroxy-acid dehydratase.